We begin with the raw amino-acid sequence, 276 residues long: Halorhodopsin (276 aa).

Residues 1–20 (MTAASTTATTVLQATQSDVL) constitute a propeptide that is removed on maturation. Gln-21 is subject to Pyrrolidone carboxylic acid. The next 7 membrane-spanning stretches (helical) occupy residues 31-51 (SSIWVNIALAGVVILLFVAMG), 61-81 (LIWVATMLVPLVSISSYAGLA), 109-129 (YLTWTFSTPMILLALGLLADT), 134-154 (LFTAITMDIGMCVTGLAAALI), 162-182 (WVFYGISCAFFVAVLYVLLVQ), 195-215 (IFGTLKILTVVLWLGYPILWA), and 220-240 (GVALLSVGVTSWGYSGLDILA). Lys-241 bears the N6-(retinylidene)lysine mark.

The protein belongs to the archaeal/bacterial/fungal opsin family. In terms of processing, the covalent binding of retinal to the apoprotein, bacterioopsin, generates bacteriorhodopsin.

The protein localises to the membrane. In terms of biological role, light-driven chloride pump. In Haloarcula marismortui (strain ATCC 43049 / DSM 3752 / JCM 8966 / VKM B-1809) (Halobacterium marismortui), this protein is Halorhodopsin (hop).